We begin with the raw amino-acid sequence, 157 residues long: Ribosome maturation factor RimP (157 aa).

This sequence belongs to the RimP family.

It localises to the cytoplasm. Required for maturation of 30S ribosomal subunits. This is Ribosome maturation factor RimP from Enterococcus faecalis (strain ATCC 700802 / V583).